Reading from the N-terminus, the 378-residue chain is 1-acyl-sn-glycerol-3-phosphate acyltransferase delta (378 aa).

A helical membrane pass occupies residues 11-31; sequence FLCHLVFCYVFIASGLIVNAI. The HXXXXD motif motif lies at 96–101; the sequence is HKFEID. 3 consecutive transmembrane segments (helical) span residues 125-145, 311-331, and 338-358; these read ELAY…IFCT, WLFW…SMVS, and LASL…MIGV.

The protein belongs to the 1-acyl-sn-glycerol-3-phosphate acyltransferase family. Expressed at a high levels in the brain, at intermediate or low levels in skeletal muscles, gut, kidney, spleen and lung. Barely detectable in heart and liver.

The protein localises to the endoplasmic reticulum membrane. The catalysed reaction is a 1-acyl-sn-glycero-3-phosphate + an acyl-CoA = a 1,2-diacyl-sn-glycero-3-phosphate + CoA. The enzyme catalyses (4Z,7Z,10Z,13Z,16Z,19Z)-docosahexaenoyl-CoA + 1-hexadecanoyl-sn-glycero-3-phosphate = 1-hexadecanoyl-2-(4Z,7Z,10Z,13Z,16Z,19Z-docosahexaenoyl)-sn-glycero-3-phosphate + CoA. It catalyses the reaction 1-octadecanoyl-sn-glycero-3-phosphate + (9Z,12Z)-octadecadienoyl-CoA = 1-octadecanoyl-2-(9Z,12Z-octadecadienoyl)-sn-glycero-3-phosphate + CoA. It carries out the reaction 1-octadecanoyl-sn-glycero-3-phosphate + (4Z,7Z,10Z,13Z,16Z,19Z)-docosahexaenoyl-CoA = 1-octadecanoyl-2-(4Z,7Z,10Z,13Z,16Z,19Z-docosahexaenoyl)-sn-glycero-3-phosphate + CoA. The catalysed reaction is (4Z,7Z,10Z,13Z,16Z,19Z)-docosahexaenoyl-CoA + 1-(9Z-octadecenoyl)-sn-glycero-3-phosphate = 1-(9Z-octadecenoyl)-2-(4Z,7Z,10Z,13Z,16Z,19Z-docosahexaenoyl)-sn-glycero-3-phosphate + CoA. It functions in the pathway phospholipid metabolism; CDP-diacylglycerol biosynthesis; CDP-diacylglycerol from sn-glycerol 3-phosphate: step 2/3. In terms of biological role, converts 1-acyl-sn-glycerol-3-phosphate (lysophosphatidic acid or LPA) into 1,2-diacyl-sn-glycerol-3-phosphate (phosphatidic acid or PA) by incorporating an acyl moiety at the sn-2 position of the glycerol backbone. Exhibits high acyl-CoA specificity for polyunsaturated fatty acyl-CoA, especially docosahexaenoyl-CoA (22:6-CoA, DHA-CoA). This Mus musculus (Mouse) protein is 1-acyl-sn-glycerol-3-phosphate acyltransferase delta (Agpat4).